Reading from the N-terminus, the 183-residue chain is Dual-action ribosomal maturation protein DarP (183 aa).

Positions 1-20 (MKQKYEDWLNDVPDNQEDDE) are disordered.

The protein belongs to the DarP family.

It localises to the cytoplasm. Functionally, member of a network of 50S ribosomal subunit biogenesis factors which assembles along the 30S-50S interface, preventing incorrect 23S rRNA structures from forming. Promotes peptidyl transferase center (PTC) maturation. This is Dual-action ribosomal maturation protein DarP from Pectobacterium carotovorum subsp. carotovorum (strain PC1).